We begin with the raw amino-acid sequence, 552 residues long: Steroid transmembrane transporter SLC22A24 (552 aa).

12 helical membrane passes run 16-36 (FQIL…PHIL), 146-166 (SVVQ…FGYL), 174-194 (MICS…AFAP), 204-224 (FLAG…VIEW), 235-255 (TLLL…AFVI), 260-280 (TLQL…RWLV), 349-369 (IVLY…GLIF), 380-400 (LFQV…LLVM), 407-427 (ISQV…TFLD), 436-456 (ILAT…SVHF), 473-493 (ILFS…VGFS), and 495-515 (YLPW…VLLL).

Belongs to the major facilitator (TC 2.A.1) superfamily. Organic cation transporter (TC 2.A.1.19) family.

The protein localises to the cell membrane. It catalyses the reaction estrone 3-sulfate(out) + glutarate(in) = estrone 3-sulfate(in) + glutarate(out). The catalysed reaction is 17beta-estradiol 17-O-(beta-D-glucuronate)(out) + glutarate(in) = 17beta-estradiol 17-O-(beta-D-glucuronate)(in) + glutarate(out). It carries out the reaction 5alpha-androstane-3alpha,17beta-diol 3-O-(beta-D-glucuronate)(out) + glutarate(in) = 5alpha-androstane-3alpha,17beta-diol 3-O-(beta-D-glucuronate)(in) + glutarate(out). The enzyme catalyses dehydroepiandrosterone 3-sulfate(out) + glutarate(in) = dehydroepiandrosterone 3-sulfate(in) + glutarate(out). It catalyses the reaction glutarate(in) + succinate(out) = glutarate(out) + succinate(in). Functionally, renal transmembrane organic anion/dicarboxylate exchanger that participates in the reabsorption of conjugated steroids, as well as bile acids, driven by an outward gradient of dicarboxylates such as glutarate or succinate. Transports androstanediol glucuronide (5alpha-androstane-3alpha,17beta-diol 3-O-(beta-D-glucuronate)), estrone 3-sulfate, and estradiol-17-glucuronide (17beta-estradiol 17-O-(beta-D-glucuronate)), but not taurocholate. The sequence is that of Steroid transmembrane transporter SLC22A24 from Microcebus murinus (Gray mouse lemur).